The sequence spans 505 residues: uncharacterized protein (505 aa).

The signal sequence occupies residues 1–22 (MAILKSALVGFICFLHFFIVNA). Residues N25 and N114 are each glycosylated (N-linked (GlcNAc...) asparagine). The next 5 helical transmembrane spans lie at 181–201 (LFLNPILLAINCLIGIWWSFI), 216–236 (ISGVVALSIVCTMVSTGYFYF), 266–286 (FLLLIVSLGYSIVVPSLGSLL), 291–311 (ILAGLQFVSSCFFLSSLFISP), and 318–338 (VILFAAPVFLITLFAMFLWIV). N342 carries N-linked (GlcNAc...) asparagine glycosylation. Transmembrane regions (helical) follow at residues 365–385 (IVICFGIVAYASIVAANAILI) and 400–420 (LLWFLNYGYTDILVLILMLTI). N454 carries N-linked (GlcNAc...) asparagine glycosylation.

It belongs to the LU7TM family.

It is found in the membrane. This is an uncharacterized protein from Schizosaccharomyces pombe (strain 972 / ATCC 24843) (Fission yeast).